A 276-amino-acid polypeptide reads, in one-letter code: Undecaprenyl-diphosphatase 2 (276 aa).

Transmembrane regions (helical) follow at residues 1 to 21 (MSLWFLVFLSVLQGVTELFPV), 44 to 64 (QLLPFLVALHLGTALALLWYF), 87 to 107 (GHLMWALIIGTIPTGIVGLLL), 114 to 134 (VFHDLRIVAIALIVNGVLLWL), 150 to 170 (MTFKQAFFVGLAQIGALIPGF), 190 to 210 (AAEFSFLLGTPIIFAAGVLEL), 222 to 242 (DALLGGVLTAIAAYLSVRFLM), and 251 to 271 (LASFGVYCVIAGVFCLGWFML).

It belongs to the UppP family.

It localises to the cell inner membrane. It catalyses the reaction di-trans,octa-cis-undecaprenyl diphosphate + H2O = di-trans,octa-cis-undecaprenyl phosphate + phosphate + H(+). In terms of biological role, catalyzes the dephosphorylation of undecaprenyl diphosphate (UPP). Confers resistance to bacitracin. This is Undecaprenyl-diphosphatase 2 from Burkholderia orbicola (strain AU 1054).